Here is a 552-residue protein sequence, read N- to C-terminus: MKKNRERFCNREREFVYKFKVGSQCLELRVPLKFPVQENASHLHGRLMLLHSLPCFIEKDLKEALTQFIEEESLSDYDRDAEASLAAVKSGEVDLHQLASTWAKAYAETTLEHARPEEPSWDEDFADVYHDLIHSPASETLLNLEHNYFVSISELIGERDVELKKLRERQGIEMEKVMQELGKSLTDQDVNSLAAQHFESQQDLENKWSNELKQSTAIQKQEYQEWVIKLHQDLKNPNNSSLSEEIKVQPSQFRESVEAIGRIYEEQRKLEESFTIHLGAQLKTMHNLRLLRADMLDFCKHKRNHRSGVKLHRLQTALSLYSTSLCGLVLLVDNRINSYSGIKRDFATVCQECTDFHFPRIEEQLEVVQQVVLYARTQRRSKLKESLDSGNQNGGNDDKTKNAERNYLNVLPGEFYITRHSNLSEIHVAFHLCVDDHVKSGNITARDPAIMGLRNILKVCCTHDITTISIPLLLVHDMSEEMTIPWCLRRAELVFKCVKGFMMEMASWDGGISRTVQFLVPQSISEEMFYQLSNMLPQIFRVSSTLTLTSKH.

The interval 383 to 403 (LKESLDSGNQNGGNDDKTKNA) is disordered.

In terms of assembly, component of the FERRY complex composed of five subunits, TBCK, PPP1R21, FERRY3, CRYZL1 and GATD1 with a ratio of 1:2:1:2:4, respectively.

The protein localises to the cytoplasm. Its subcellular location is the early endosome. In terms of biological role, component of the FERRY complex (Five-subunit Endosomal Rab5 and RNA/ribosome intermediary). The FERRY complex directly interacts with mRNAs and RAB5A, and functions as a RAB5A effector involved in the localization and the distribution of specific mRNAs most likely by mediating their endosomal transport. The complex recruits mRNAs and ribosomes to early endosomes through direct mRNA-interaction. Plays a role in mast cell degranulation. The sequence is that of Ferry endosomal RAB5 effector complex subunit 3 from Homo sapiens (Human).